Consider the following 228-residue polypeptide: MLKLKQQVFEANMDLPRYGLVTFTWGNVSAIDRERGLVVIKPSGVAYETMKADDMVVVDMSGKVVEGEYRPSSDTATHLELYRRYPSLGGIVHTHSTHATAWAQAGLAIPALGTTHADYFFGDIPCTRGLSEEEVQGEYELNTGKVIIETLGNAEPLHTPGIVVYQHGPFAWGKDAHDAVHNAVVMEEVAKMAWIARGINPQLNHIDSFLMNKHFMRKHGPNAYYGQK.

Substrate contacts are provided by residues 26-27 (GN), 43-44 (SG), and 72-73 (SS). Zn(2+) contacts are provided by Asp-74, His-93, and His-95. Catalysis depends on Asp-118, which acts as the Proton donor/acceptor. Zn(2+) is bound at residue His-167. The active-site Proton donor/acceptor is the Tyr-225.

This sequence belongs to the aldolase class II family. AraD/FucA subfamily. Requires Zn(2+) as cofactor.

It carries out the reaction L-ribulose 5-phosphate = D-xylulose 5-phosphate. It participates in cofactor degradation; L-ascorbate degradation; D-xylulose 5-phosphate from L-ascorbate: step 4/4. Functionally, catalyzes the isomerization of L-ribulose 5-phosphate to D-xylulose 5-phosphate. Is involved in the anaerobic L-ascorbate utilization. This Escherichia coli (strain SE11) protein is L-ribulose-5-phosphate 4-epimerase UlaF.